Reading from the N-terminus, the 453-residue chain is Choline kinase alpha (453 aa).

Residues 22-81 are disordered; it reads CGGNAAPTPGVGQQRDAAGELESKQLGGRTQPLALPPPPPPPLPLPPPPSPPLADEQPEP. Over residues 55 to 73 the composition is skewed to pro residues; the sequence is ALPPPPPPPLPLPPPPSPP. Ser71 carries the post-translational modification Phosphoserine. ATP is bound by residues 113-119, Arg142, and 203-209; these read RGGLSNM and QFIPSRR. Residue 115-117 coordinates phosphocholine; that stretch reads GLS. Lys243 carries the N6-acetyllysine modification. Phosphoserine is present on Ser275. 2 residues coordinate ATP: Gln304 and Asp326.

The protein belongs to the choline/ethanolamine kinase family. Homodimer. Heterodimer with CHKB. As to quaternary structure, monomer; acetylation by KAT5 promotes dissociation of the homodimer and monomerization. In terms of processing, phosphorylated at Ser-275 by AMPK in response to glucose deprivation, leading to localization to lipid droplets. Acetylated by KAT5 at Lys-243 following phosphorylation by AMPK, leading to monomerization and conversion into a tyrosine-protein kinase. As to expression, expressed ubiquitously with the highest level in testis.

It is found in the cytoplasm. The protein resides in the cytosol. The protein localises to the lipid droplet. The enzyme catalyses choline + ATP = phosphocholine + ADP + H(+). It carries out the reaction ethanolamine + ATP = phosphoethanolamine + ADP + H(+). It catalyses the reaction L-tyrosyl-[protein] + ATP = O-phospho-L-tyrosyl-[protein] + ADP + H(+). The protein operates within phospholipid metabolism; phosphatidylcholine biosynthesis; phosphocholine from choline: step 1/1. It functions in the pathway phospholipid metabolism; phosphatidylethanolamine biosynthesis; phosphatidylethanolamine from ethanolamine: step 1/3. Its function is as follows. Plays a key role in phospholipid biosynthesis by catalyzing the phosphorylation of free choline to phosphocholine, the first step in phosphatidylcholine biosynthesis. Also phosphorylates ethanolamine, thereby contributing to phosphatidylethanolamine biosynthesis. Has higher activity with choline. In terms of biological role, this isoform plays a key role in lipolysis of lipid droplets following glucose deprivation. In response to glucose deprivation, phosphorylated by AMPK, promoting localization to lipid droplets. Phosphorylation is followed by acetylation by KAT5, leading to dissociation of the homodimer into a monomer. Monomeric CHKA isoform 1 is converted into a tyrosine-protein kinase, which phosphorylates lipid droplet structural proteins PLIN2 and PLIN3, leading to lipolysis of lipid droplets. The protein is Choline kinase alpha (Chka) of Mus musculus (Mouse).